Consider the following 176-residue polypeptide: Probable chemoreceptor glutamine deamidase CheD (176 aa).

It belongs to the CheD family.

The catalysed reaction is L-glutaminyl-[protein] + H2O = L-glutamyl-[protein] + NH4(+). Its function is as follows. Probably deamidates glutamine residues to glutamate on methyl-accepting chemotaxis receptors (MCPs), playing an important role in chemotaxis. The chain is Probable chemoreceptor glutamine deamidase CheD from Rhodospirillum rubrum (strain ATCC 11170 / ATH 1.1.1 / DSM 467 / LMG 4362 / NCIMB 8255 / S1).